The primary structure comprises 541 residues: Chaperonin GroEL (541 aa).

ATP is bound by residues 30-33 (TLGP), Lys-51, 87-91 (DGTTT), Gly-415, and Asp-495.

The protein belongs to the chaperonin (HSP60) family. As to quaternary structure, forms a cylinder of 14 subunits composed of two heptameric rings stacked back-to-back. Interacts with the co-chaperonin GroES.

The protein resides in the cytoplasm. It carries out the reaction ATP + H2O + a folded polypeptide = ADP + phosphate + an unfolded polypeptide.. Functionally, together with its co-chaperonin GroES, plays an essential role in assisting protein folding. The GroEL-GroES system forms a nano-cage that allows encapsulation of the non-native substrate proteins and provides a physical environment optimized to promote and accelerate protein folding. The polypeptide is Chaperonin GroEL (Pantoea ananas (Erwinia uredovora)).